The chain runs to 786 residues: Diamine oxidase [copper-containing] 1, peroxisomal (786 aa).

419-430 contacts substrate; it reads AFDAGEDGLGKN. The active-site Proton acceptor is Asp421. A disulfide bridge links Cys440 with Cys466. 502-507 is a binding site for substrate; that stretch reads VANYEY. Tyr505 (schiff-base intermediate with substrate; via topaquinone) is an active-site residue. Residue Tyr505 is modified to 2',4',5'-topaquinone. Positions 555 and 557 each coordinate Cu cation. Mn(2+)-binding residues include Asp710 and Ile711. His721 serves as a coordination point for Cu cation.

The protein belongs to the copper/topaquinone oxidase family. Homodimer. The cofactor is Cu cation. Zn(2+) serves as cofactor. L-topaquinone is required as a cofactor. In terms of processing, topaquinone (TPQ) is generated by copper-dependent autoxidation of a specific tyrosyl residue. In terms of tissue distribution, mainly expressed in roots, and, to a lower extent, in leaves and stems.

The protein resides in the peroxisome. The catalysed reaction is a primary methyl amine + O2 + H2O = an aldehyde + H2O2 + NH4(+). It catalyses the reaction N-methylputrescine + O2 + H2O = 4-methylaminobutanal + H2O2 + NH4(+). The protein operates within alkaloid biosynthesis; nicotine biosynthesis. It functions in the pathway amine and polyamine degradation; putrescine degradation. Involved in putrescine catabolism in peroxisomes. May also be involved in the biosynthesis of pyridine alkaloid natural products, leading mainly to the production of anabasine, anatabine, nicotine and nornicotine, effective deterrents against herbivores with antiparasitic and pesticide properties (neurotoxins); nornicotine serves as the precursor in the synthesis of the carcinogen compound N'-nitrosonornicotine (NNN). Oxidizes preferentially non-N-methylated amines. The sequence is that of Diamine oxidase [copper-containing] 1, peroxisomal from Nicotiana tabacum (Common tobacco).